Reading from the N-terminus, the 941-residue chain is Cilia- and flagella-associated protein 69 (941 aa).

Over residues 1-10 the composition is skewed to low complexity; the sequence is MWTEEAAATA. Positions 1–23 are disordered; that stretch reads MWTEEAAATAEARESGIRNKSSS.

The protein localises to the cell projection. Its subcellular location is the cilium. It is found in the flagellum. Its function is as follows. Cilium- and flagellum-associated protein. In the olfactory epithelium, regulates the speed of activation and termination of the odor response and thus contributes to the robustness of olfactory transduction pathways. Required for sperm flagellum assembly and stability. This Papio anubis (Olive baboon) protein is Cilia- and flagella-associated protein 69.